Here is a 774-residue protein sequence, read N- to C-terminus: MSPAQIIRTPHSFPPSFTGTSSSAENSHAQSPQQVLTRAFVASGELNAAFGRTSTASEQDFTSLLGTLQRELERKTLSFPDIAELANQLAEAAKGDQGGHWLGRDEQQTLKGMIDRCKSQLAHTHASDASYDPLAQVCENLKTARLHQSISQMTGEAHAKVRGVPDLLALIQLDPDVLAEKPVGMTSYVNFGSFICMAKARTAELSEDLRSDPNEVALLLHPHADTILELERLPDALAALTENCPDTPTRDDLRSLAKETGELLQQLRANDLLPRSEEVSSYQGETSVRSREVVEPKLTLCQAGGNGQGQLEASSARPESLRYAPTRAASSGSEARVPGQAVGGKIADDAQKVAGLYAEKKRTNWTQANGVAGKISHKIQSLLGMRDAGSRVQAFVAFMADGKGRPGATMLDLGDGWMRATRVIKGEAALIDFQCDSDGKVVDARHPGRFPVLPQGNEREAFKTVLQELKFRGAETLSKVPVYYVNRNTRGYVIPTHGYVVAGHPNRGRKSGAVLYGVGGDPKRGPVALDEKLLGHLVGRSDSKTSSKLSAPVKAAISALAGASFATREDFYDAYCAVRGDAVDPLERHNEISSIYRLLPLSTMEMWPKKADDYRVARPAAPERDLRAFENLPKDIGRKAQLKKVSNVDSIDLLEAKRQFTLHQLYQDEMLGRNGTGVPSADFKPKVDAQRRDQLVASTPKFQRLPPHTTDKVGNCNTGASSLLQRAVDTYTEKNNLPPEKVTAASIFGIGSSHRLAIWDPLDGSSSNKSSKDR.

Disordered stretches follow at residues 1–33 (MSPA…QSPQ) and 301–340 (CQAG…VPGQ). Low complexity predominate over residues 9-23 (TPHSFPPSFTGTSSS). The segment covering 24–33 (AENSHAQSPQ) has biased composition (polar residues).

Belongs to the HopW family. In terms of assembly, interacts (via C-terminus) with Arabidopsis WIN1, WIN2 and WIN3.

The protein localises to the secreted. Functionally, induces hypersensitive response (HR). This chain is Effector protein hopW1-1 (hopW1-1), found in Pseudomonas syringae pv. maculicola.